Reading from the N-terminus, the 284-residue chain is Homeobox protein six1b (284 aa).

The segment at residues 124–183 (GEETSYCFKEKSRGVLREWYTHNPYPSPREKRELAEATGLTTTQVSNWFKNRRQRDRAAE) is a DNA-binding region (homeobox). Positions 167 to 238 (QVSNWFKNRR…NSVLLLQGNM (72 aa)) are disordered. The span at 179 to 190 (DRAAEAKERENS) shows a compositional bias: basic and acidic residues. 2 stretches are compositionally biased toward polar residues: residues 191–204 (ENNN…NQLS) and 226–238 (PDQN…QGNM).

It belongs to the SIX/Sine oculis homeobox family. In terms of assembly, interacts with eya1.

The protein resides in the nucleus. It is found in the cytoplasm. Functionally, transcription factor that is involved in the regulation of cell proliferation, apoptosis and embryonic development. Depending on context, functions as a transcriptional repressor or activator. Transcriptional activation is enhanced by eya1 (in vitro). Plays an important role in the development of the inner ear, where it promotes hair cell proliferation and inhibits proliferation of neural progenitor cells. Required for normal myogenesis. Plays a role in the development of fast muscle fibers throughout the body, as well as the development of craniofacial muscles. Required for normal expression of myod1 and myog during myogenesis. This Danio rerio (Zebrafish) protein is Homeobox protein six1b (six1b).